The sequence spans 193 residues: uncharacterized protein (193 aa).

Positions 1-26 are cleaved as a signal peptide; the sequence is MRNVFVGALCMCGMSFVFSDSVRSAA.

This is an uncharacterized protein from Treponema pallidum (strain Nichols).